The primary structure comprises 634 residues: tRNA uridine 5-carboxymethylaminomethyl modification enzyme MnmG (634 aa).

FAD is bound at residue 14–19; it reads GGGHAG. Position 279 to 293 (279 to 293) interacts with NAD(+); the sequence is GPRYCPSIEDKVVRF.

The protein belongs to the MnmG family. In terms of assembly, homodimer. Heterotetramer of two MnmE and two MnmG subunits. FAD is required as a cofactor.

Its subcellular location is the cytoplasm. NAD-binding protein involved in the addition of a carboxymethylaminomethyl (cmnm) group at the wobble position (U34) of certain tRNAs, forming tRNA-cmnm(5)s(2)U34. The polypeptide is tRNA uridine 5-carboxymethylaminomethyl modification enzyme MnmG (Xanthomonas oryzae pv. oryzae (strain KACC10331 / KXO85)).